A 188-amino-acid polypeptide reads, in one-letter code: Probable nicotinate-nucleotide adenylyltransferase (188 aa).

This sequence belongs to the NadD family.

The enzyme catalyses nicotinate beta-D-ribonucleotide + ATP + H(+) = deamido-NAD(+) + diphosphate. Its pathway is cofactor biosynthesis; NAD(+) biosynthesis; deamido-NAD(+) from nicotinate D-ribonucleotide: step 1/1. Catalyzes the reversible adenylation of nicotinate mononucleotide (NaMN) to nicotinic acid adenine dinucleotide (NaAD). The chain is Probable nicotinate-nucleotide adenylyltransferase from Sulfurovum sp. (strain NBC37-1).